We begin with the raw amino-acid sequence, 311 residues long: Pyrimidine-specific ribonucleoside hydrolase RihA (311 aa).

H240 is an active-site residue.

It belongs to the IUNH family. RihA subfamily.

Its function is as follows. Hydrolyzes cytidine or uridine to ribose and cytosine or uracil, respectively. The sequence is that of Pyrimidine-specific ribonucleoside hydrolase RihA from Salmonella newport (strain SL254).